A 238-amino-acid polypeptide reads, in one-letter code: Probable transcriptional regulatory protein Sde_1551 (238 aa).

The protein belongs to the TACO1 family.

The protein resides in the cytoplasm. This Saccharophagus degradans (strain 2-40 / ATCC 43961 / DSM 17024) protein is Probable transcriptional regulatory protein Sde_1551.